The chain runs to 426 residues: Mediator of RNA polymerase II transcription subunit 1 (426 aa).

The disordered stretch occupies residues 324–356; it reads VGDAPAPAAQPPLHRRRSSNKGCRRASAAESAT. The segment covering 336 to 347 has biased composition (basic residues); sequence LHRRRSSNKGCR.

Belongs to the Mediator complex subunit 1 family. As to quaternary structure, component of the Mediator complex.

It localises to the nucleus. In terms of biological role, component of the Mediator complex, a coactivator involved in the regulated transcription of nearly all RNA polymerase II-dependent genes. Mediator functions as a bridge to convey information from gene-specific regulatory proteins to the basal RNA polymerase II transcription machinery. Mediator is recruited to promoters by direct interactions with regulatory proteins and serves as a scaffold for the assembly of a functional preinitiation complex with RNA polymerase II and the general transcription factors. The sequence is that of Mediator of RNA polymerase II transcription subunit 1 (MED1) from Eremothecium gossypii (strain ATCC 10895 / CBS 109.51 / FGSC 9923 / NRRL Y-1056) (Yeast).